The following is a 196-amino-acid chain: Ribonuclease HII (196 aa).

The 182-residue stretch at 15–196 (YIVAGIDEAG…RKSFRYSCFI (182 aa)) folds into the RNase H type-2 domain. Positions 21, 22, and 112 each coordinate a divalent metal cation.

Belongs to the RNase HII family. The cofactor is Mn(2+). Requires Mg(2+) as cofactor.

It is found in the cytoplasm. It catalyses the reaction Endonucleolytic cleavage to 5'-phosphomonoester.. Its function is as follows. Endonuclease that specifically degrades the RNA of RNA-DNA hybrids. This chain is Ribonuclease HII, found in Rickettsia canadensis (strain McKiel).